Reading from the N-terminus, the 475-residue chain is Actin-related protein 10 (475 aa).

It belongs to the actin family.

It localises to the cytoplasm. The protein localises to the cytoskeleton. This Dictyostelium discoideum (Social amoeba) protein is Actin-related protein 10.